The chain runs to 609 residues: Alpha-fetoprotein (609 aa).

An N-terminal signal peptide occupies residues 1-18 (MKWVVSILLIFLLNSTES). Albumin domains follow at residues 19-210 (RTMH…ATIT), 211-402 (KELR…EELQ), and 403-601 (KYIQ…QLIS). His-22 is a Cu(2+) binding site. 8 disulfides stabilise this stretch: Cys-99–Cys-114, Cys-113–Cys-124, Cys-148–Cys-193, Cys-192–Cys-201, Cys-224–Cys-270, Cys-269–Cys-277, Cys-289–Cys-303, and Cys-302–Cys-313. Phosphoserine is present on residues Ser-111 and Ser-115. N-linked (GlcNAc...) asparagine glycosylation occurs at Asn-251. Phosphoserine is present on Ser-344. 7 disulfides stabilise this stretch: Cys-384–Cys-393, Cys-416–Cys-462, Cys-461–Cys-472, Cys-485–Cys-501, Cys-500–Cys-511, Cys-538–Cys-583, and Cys-582–Cys-591.

The protein belongs to the ALB/AFP/VDB family. As to quaternary structure, dimeric and trimeric forms have been found in addition to the monomeric form. Sulfated. As to expression, plasma.

Its subcellular location is the secreted. Binds copper, nickel, and fatty acids as well as, and bilirubin less well than, serum albumin. In Equus caballus (Horse), this protein is Alpha-fetoprotein (AFP).